Here is a 505-residue protein sequence, read N- to C-terminus: ADP-ribosylarginine hydrolase CG2909 (505 aa).

12 residues coordinate ADP-D-ribose: Arg-198, Gly-336, Gly-338, Gly-340, Val-341, Trp-342, Trp-377, Asp-432, Asn-439, Glu-440, Gly-450, and Asp-451.

The catalysed reaction is N(omega)-(ADP-D-ribosyl)-L-arginyl-[protein] + H2O = ADP-D-ribose + L-arginyl-[protein]. It carries out the reaction N(omega)-(ADP-D-ribosyl)-L-arginine + H2O = ADP-D-ribose + L-arginine. Protein ADP-ribosyl hydrolase that specifically removes mono-ADP-ribosyl modifications from protein arginine residues. The chain is ADP-ribosylarginine hydrolase CG2909 from Drosophila melanogaster (Fruit fly).